Reading from the N-terminus, the 226-residue chain is dITP/XTP pyrophosphatase (226 aa).

14–19 serves as a coordination point for substrate; the sequence is TGNKDK. The Mg(2+) site is built by glutamate 49 and aspartate 83. Aspartate 83 acts as the Proton acceptor in catalysis. Substrate-binding positions include threonine 84, 176–179, lysine 199, and 204–205; these read FGYD and HR.

It belongs to the HAM1 NTPase family. Homodimer. It depends on Mg(2+) as a cofactor.

It carries out the reaction XTP + H2O = XMP + diphosphate + H(+). The catalysed reaction is dITP + H2O = dIMP + diphosphate + H(+). The enzyme catalyses ITP + H2O = IMP + diphosphate + H(+). Functionally, pyrophosphatase that catalyzes the hydrolysis of nucleoside triphosphates to their monophosphate derivatives, with a high preference for the non-canonical purine nucleotides XTP (xanthosine triphosphate), dITP (deoxyinosine triphosphate) and ITP. Seems to function as a house-cleaning enzyme that removes non-canonical purine nucleotides from the nucleotide pool, thus preventing their incorporation into DNA/RNA and avoiding chromosomal lesions. The protein is dITP/XTP pyrophosphatase of Chlorobaculum tepidum (strain ATCC 49652 / DSM 12025 / NBRC 103806 / TLS) (Chlorobium tepidum).